Reading from the N-terminus, the 442-residue chain is Probable protein phosphatase 2C 15 (442 aa).

A PPM-type phosphatase domain is found at 35-303 (AAERPELQVG…DDTTCIVVDI (269 aa)). The Mn(2+) site is built by aspartate 80, glycine 81, aspartate 255, and aspartate 294. The span at 420-434 (KKEAMEGKRRSRDSS) shows a compositional bias: basic and acidic residues. A disordered region spans residues 420–442 (KKEAMEGKRRSRDSSSRNSGSSE).

It belongs to the PP2C family. Mg(2+) is required as a cofactor. Requires Mn(2+) as cofactor.

The enzyme catalyses O-phospho-L-seryl-[protein] + H2O = L-seryl-[protein] + phosphate. The catalysed reaction is O-phospho-L-threonyl-[protein] + H2O = L-threonyl-[protein] + phosphate. The sequence is that of Probable protein phosphatase 2C 15 from Oryza sativa subsp. japonica (Rice).